The sequence spans 344 residues: Olfactory receptor class A-like protein 4 (344 aa).

The Extracellular portion of the chain corresponds to 1-10 (MSEVLTVDAV). The helical transmembrane segment at 11–31 (LFGLLVFSGIIGNIMVIYVVF) threads the bilayer. Residues 32–47 (DCAKLCASRHLPPSDT) are Cytoplasmic-facing. A helical transmembrane segment spans residues 48-68 (ILVHLCLANLLTSVFRTVPIF). Residues 69–84 (VSDLGLQVWLTAGWCR) lie on the Extracellular side of the membrane. C83 and C169 are oxidised to a cystine. A helical transmembrane segment spans residues 85–105 (VFMLLWVWWRAVGCWVTLALS). At 106–130 (AFHCATLRRQHVSMGPLGHSRERRR) the chain is on the cytoplasmic side. The chain crosses the membrane as a helical span at residues 131–151 (VWVVLAVVWAANLLFSLPALV). Over 152–186 (YTTQVRGNATVELMVISCTTRPLLGCVWEFPTFQQ) the chain is Extracellular. N-linked (GlcNAc...) asparagine glycosylation occurs at N159. A helical membrane pass occupies residues 187–207 (GYAFASSSLALNEVLPLVLMV). The Cytoplasmic segment spans residues 208–246 (GTNLATLQALGKHIRTVRAGGSTGAELDRHVSSERKAGH). Residues 247 to 267 (VIMALVALFVGCWVLQVAAVT) traverse the membrane as a helical segment. Over 268–279 (YYNHNRGAHAEG) the chain is Extracellular. A helical transmembrane segment spans residues 280 to 300 (LLTVAHFSASLFVGFSPLVVA). Residues 301–344 (LGHGKLRRRISGILQSCMHRLKQTQDKPAEITEKDGRTTQSAMK) are Cytoplasmic-facing. The span at 324 to 337 (TQDKPAEITEKDGR) shows a compositional bias: basic and acidic residues. Residues 324-344 (TQDKPAEITEKDGRTTQSAMK) form a disordered region.

The protein belongs to the G-protein coupled receptor 1 family. As to expression, highly expressed in the olfactory rosette. Specifically localizes to crypt neurons in the olfactory neuroepithelium. Colocalizes with the inhibitory G-protein gnaia in crypt neurons. Not detected in other tissues tested.

It is found in the cell membrane. In terms of biological role, probable olfactory receptor. This is Olfactory receptor class A-like protein 4 (ora4) from Danio rerio (Zebrafish).